The primary structure comprises 231 residues: MASGRSSIYQDLSEEHPRKLIPELCKQFYNLGWVTGTGGGISIKLDDEIYIAPSGVQKERIQPDDLFIQNIEGDDLQTPPDYKKLTKSQCTPLFMLAYKERSAGAVIHTHSPAAVMTTLLWPGKEFRCTHLEMIKGIYDYELNRNLMYDEELVVPIIENTLFEKDLEESMANALRDYPGTSAILVRRHGVYVWGHNWQKAKTMAECYDYLFSLAVEMHKVGLDANAVPKRY.

Substrate is bound at residue C90. Zn(2+) contacts are provided by H108 and H110. E132 functions as the Proton donor/acceptor in the catalytic mechanism. H188 lines the Zn(2+) pocket.

Belongs to the aldolase class II family. MtnB subfamily. Zn(2+) is required as a cofactor.

Its subcellular location is the cytoplasm. The catalysed reaction is 5-(methylsulfanyl)-D-ribulose 1-phosphate = 5-methylsulfanyl-2,3-dioxopentyl phosphate + H2O. It functions in the pathway amino-acid biosynthesis; L-methionine biosynthesis via salvage pathway; L-methionine from S-methyl-5-thio-alpha-D-ribose 1-phosphate: step 2/6. Its function is as follows. Catalyzes the dehydration of methylthioribulose-1-phosphate (MTRu-1-P) into 2,3-diketo-5-methylthiopentyl-1-phosphate (DK-MTP-1-P). This chain is Probable methylthioribulose-1-phosphate dehydratase, found in Anopheles gambiae (African malaria mosquito).